The chain runs to 629 residues: tRNA uridine 5-carboxymethylaminomethyl modification enzyme MnmG (629 aa).

Position 4–9 (4–9 (GGGHAG)) interacts with FAD. 268–282 (GPRYCPSIEDKVNRF) provides a ligand contact to NAD(+).

Belongs to the MnmG family. In terms of assembly, homodimer. Heterotetramer of two MnmE and two MnmG subunits. Requires FAD as cofactor.

Its subcellular location is the cytoplasm. In terms of biological role, NAD-binding protein involved in the addition of a carboxymethylaminomethyl (cmnm) group at the wobble position (U34) of certain tRNAs, forming tRNA-cmnm(5)s(2)U34. This is tRNA uridine 5-carboxymethylaminomethyl modification enzyme MnmG from Helicobacter hepaticus (strain ATCC 51449 / 3B1).